Reading from the N-terminus, the 552-residue chain is MAGUK p55 subfamily member 2 (552 aa).

2 L27 domains span residues 8 to 59 and 60 to 118; these read SESA…EETK and LEAV…YETP. Residue serine 42 is modified to Phosphoserine. The residue at position 117 (threonine 117) is a Phosphothreonine. Phosphoserine is present on serine 121. The 80-residue stretch at 140–219 folds into the PDZ domain; that stretch reads MVGIRKTAGE…SVILKILPSY (80 aa). One can recognise an SH3 domain in the interval 225–293; sequence PRQVFVKCHF…PSQLLEEKRK (69 aa). The region spanning 350-537 is the Guanylate kinase-like domain; that stretch reads RKTLVLIGAQ…TFRELQTAME (188 aa).

This sequence belongs to the MAGUK family. As to quaternary structure, can homomultimerise. Interacts with CACNG2. Interacts (via the SH3-Guanylate kinase-like sub-module) with DLG4/PSD95 and DLGAP1/GKAP. Interacts (via the PDZ domain) with CADM1 (via C-terminus). Interacts with KCNN2/SK2 (via N-terminal domain). Interacts with SRC. Phosphorylated by SRC. As to expression, expressed in pyramidal neurons of CA1 region of the hippocampus.

The protein localises to the cell projection. Its subcellular location is the dendrite. It localises to the postsynaptic density. The protein resides in the cytoplasm. It is found in the cytoskeleton. The protein localises to the membrane. Functionally, postsynaptic MAGUK scaffold protein that links CADM1 cell adhesion molecules to core components of the postsynaptic density. In CA1 pyramidal neurons, required for synaptic KCNN2-containing channel function and long-term potentiation expression. Seems to negatively regulate SRC function in epithelial cells. This is MAGUK p55 subfamily member 2 from Mus musculus (Mouse).